Reading from the N-terminus, the 416-residue chain is Enolase (416 aa).

Position 160 (Gln-160) interacts with (2R)-2-phosphoglycerate. Glu-204 (proton donor) is an active-site residue. Mg(2+) is bound by residues Asp-239, Glu-280, and Asp-306. 4 residues coordinate (2R)-2-phosphoglycerate: Lys-331, Arg-360, Ser-361, and Lys-382. Lys-331 functions as the Proton acceptor in the catalytic mechanism.

Belongs to the enolase family. Requires Mg(2+) as cofactor.

It is found in the cytoplasm. It localises to the secreted. Its subcellular location is the cell surface. It catalyses the reaction (2R)-2-phosphoglycerate = phosphoenolpyruvate + H2O. Its pathway is carbohydrate degradation; glycolysis; pyruvate from D-glyceraldehyde 3-phosphate: step 4/5. Its function is as follows. Catalyzes the reversible conversion of 2-phosphoglycerate (2-PG) into phosphoenolpyruvate (PEP). It is essential for the degradation of carbohydrates via glycolysis. This Sulfolobus acidocaldarius (strain ATCC 33909 / DSM 639 / JCM 8929 / NBRC 15157 / NCIMB 11770) protein is Enolase.